Here is a 438-residue protein sequence, read N- to C-terminus: sn-glycerol-3-phosphate-binding periplasmic protein UgpB (438 aa).

A signal peptide spans 1–23 (MKPLHYTASALALGLALMGNAQA). Sn-glycerol 3-phosphate is bound by residues Y65, E89, S144, S270, G307, Y346, and R397.

It belongs to the bacterial solute-binding protein 1 family. The complex is composed of two ATP-binding proteins (UgpC), two transmembrane proteins (UgpA and UgpE) and a solute-binding protein (UgpB).

The protein resides in the periplasm. Its function is as follows. Part of the ABC transporter complex UgpBAEC involved in sn-glycerol-3-phosphate (G3P) import. Binds G3P. In Shigella flexneri, this protein is sn-glycerol-3-phosphate-binding periplasmic protein UgpB (ugpB).